A 692-amino-acid chain; its full sequence is Furin-like protease kpc-1 (692 aa).

The signal sequence occupies residues Met-1–Ala-33. Asn-3 is a glycosylation site (N-linked (GlcNAc...) asparagine). Positions His-34–Arg-139 are excised as a propeptide. Residues Gly-140–Ser-670 lie on the Lumenal side of the membrane. The disordered stretch occupies residues Asp-152–Pro-177. Ca(2+) is bound at residue Asp-176. Positions Met-182–Val-503 constitute a Peptidase S8 domain. The active-site Charge relay system is the Asp-221. Asp-222 is a substrate binding site. Ca(2+) is bound by residues Asp-230, Asp-242, Asp-247, and Asp-249. A disordered region spans residues Asp-230–Asp-249. Glu-259 to Asn-260 provides a ligand contact to substrate. His-262 serves as the catalytic Charge relay system. A Ca(2+)-binding site is contributed by Ile-273. Asn-275 carries an N-linked (GlcNAc...) asparagine glycan. Residues Asn-276, Leu-278, and Ile-280 each coordinate Ca(2+). 2 disulfides stabilise this stretch: Cys-279/Cys-428 and Cys-371/Cys-401. Residues Glu-304, Ser-321–Asp-326, Asp-332, and Ala-360–Asn-363 each bind substrate. Residue Asp-326 participates in Ca(2+) binding. Asp-369 serves as a coordination point for Ca(2+). Positions 374 and 376 each coordinate substrate. Glu-399 provides a ligand contact to Ca(2+). Ser-436 serves as the catalytic Charge relay system. Substrate is bound at residue Ser-436. N-linked (GlcNAc...) asparagine glycosylation is found at Asn-455 and Asn-487. Residues Val-512–Glu-646 enclose the P/Homo B domain. Cysteines 518 and 544 form a disulfide. The Cell attachment site signature appears at Arg-570 to Asp-572. A helical transmembrane segment spans residues Gly-671 to Tyr-692.

Belongs to the peptidase S8 family. Furin subfamily. Interacts (via extracellular domain) with receptor dma-1 (via extracellular domain); the interaction promotes dma-1 internalization. It depends on Ca(2+) as a cofactor. In terms of tissue distribution, expressed in the nervous system including the ventral nerve cord, the nerve ring and the retrovesicular ganglion, and in epithelial cells. Expressed in IL2 neurons. Expressed in PVD mechanosensory neurons. Expressed in pharynx with strong expression in the g2 pharyngeal gland cells and vpi pharyngeal intestinal valve cells. Expressed in intestine.

It localises to the cell membrane. The protein localises to the perikaryon. It is found in the cell projection. The protein resides in the axon. Furin-like protease which cleaves proproteins at the RX(K/R)R consensus motif. During neuronal development, regulates the formation and extension of dendrite branches and cellular positioning of various type of neurons. Together with chin-1 and cdc-42, plays a role in the development of the neuropil and is required for the guidance of axons from neurons, including SubL pioneer neurons and AIY interneurons, into the nerve ring. Its role in axon guidance in glia and pioneer neurons may be through ensuring the fmi-1 protein is correctly localized to the nerve ring. Promotes the formation, extension and self-avoidance of dendritic branches of PVD and FLP mechanosensory neurons. In PVD neurons, regulates plasma membrane levels of branching receptor dma-1 by targeting it to late endosomes and thus promotes normal dendrite branching and dendrite self-avoidance. Also controls dendrite extension in AIY and D-type motoneurons, dendrite branching in AQR sensory neurons and VC4/5 motoneurons, the normal number of dendritic branches in AVL neurons and the positioning of HSN and ALM/PLM neurons. Dispensable for maintaining dendrite branching in adults. Also regulates dauer-specific dendritic branching of IL2 neurons and dauer-specific nictation behavior. Under adverse environmental conditions, may promote dauer formation by processing insulin-like proteins ins-1 and ins-18, two daf-2/InsR antagonists. This chain is Furin-like protease kpc-1, found in Caenorhabditis elegans.